Reading from the N-terminus, the 407-residue chain is Formate-dependent phosphoribosylglycinamide formyltransferase (407 aa).

N(1)-(5-phospho-beta-D-ribosyl)glycinamide is bound by residues 28–29 (EL) and glutamate 88. Residues arginine 121, lysine 162, 167–172 (SSGKGQ), 202–205 (EGFI), and glutamate 210 each bind ATP. The 195-residue stretch at 126–320 (RLAAEELGVA…EFELHAKAIL (195 aa)) folds into the ATP-grasp domain. 2 residues coordinate Mg(2+): glutamate 279 and glutamate 291. N(1)-(5-phospho-beta-D-ribosyl)glycinamide contacts are provided by residues aspartate 298, lysine 367, and 374 to 375 (RR).

It belongs to the PurK/PurT family. In terms of assembly, homodimer.

The enzyme catalyses N(1)-(5-phospho-beta-D-ribosyl)glycinamide + formate + ATP = N(2)-formyl-N(1)-(5-phospho-beta-D-ribosyl)glycinamide + ADP + phosphate + H(+). The protein operates within purine metabolism; IMP biosynthesis via de novo pathway; N(2)-formyl-N(1)-(5-phospho-D-ribosyl)glycinamide from N(1)-(5-phospho-D-ribosyl)glycinamide (formate route): step 1/1. Its function is as follows. Involved in the de novo purine biosynthesis. Catalyzes the transfer of formate to 5-phospho-ribosyl-glycinamide (GAR), producing 5-phospho-ribosyl-N-formylglycinamide (FGAR). Formate is provided by PurU via hydrolysis of 10-formyl-tetrahydrofolate. This is Formate-dependent phosphoribosylglycinamide formyltransferase from Herminiimonas arsenicoxydans.